Consider the following 347-residue polypeptide: GMP reductase (347 aa).

Residue 108–131 coordinates NADP(+); sequence ADFEKTKQILDLNPALNFVCIDVA. K(+)-binding residues include glycine 181 and glycine 183. Cysteine 186 acts as the Thioimidate intermediate in catalysis. 216–239 is an NADP(+) binding site; that stretch reads IVSDGGCTTPGDVAKAFGGGADFV.

The protein belongs to the IMPDH/GMPR family. GuaC type 1 subfamily. As to quaternary structure, homotetramer.

It carries out the reaction IMP + NH4(+) + NADP(+) = GMP + NADPH + 2 H(+). Its function is as follows. Catalyzes the irreversible NADPH-dependent deamination of GMP to IMP. It functions in the conversion of nucleobase, nucleoside and nucleotide derivatives of G to A nucleotides, and in maintaining the intracellular balance of A and G nucleotides. The sequence is that of GMP reductase from Escherichia coli (strain SMS-3-5 / SECEC).